The primary structure comprises 337 residues: Sideroflexin-4 (337 aa).

The residue at position 2 (Ser-2) is an N-acetylserine. The next 3 helical transmembrane spans lie at 111–131, 133–153, and 165–185; these read AAFL…LKGI, SVIL…SING, and SLLM…PQFV. Position 197 is an N6-acetyllysine (Lys-197). Helical transmembrane passes span 251–271 and 293–313; these read ASRI…TYFF and VLAM…IGQI.

Belongs to the sideroflexin family.

The protein resides in the mitochondrion inner membrane. Functionally, mitochondrial amino-acid transporter. Does not act as a serine transporter: not able to mediate transport of serine into mitochondria. The protein is Sideroflexin-4 of Homo sapiens (Human).